Reading from the N-terminus, the 417-residue chain is Serine hydroxymethyltransferase (417 aa).

Residues Leu-121 and 125–127 (GHL) each bind (6S)-5,6,7,8-tetrahydrofolate. Residue Lys-229 is modified to N6-(pyridoxal phosphate)lysine. Residue 355 to 357 (SPF) participates in (6S)-5,6,7,8-tetrahydrofolate binding.

This sequence belongs to the SHMT family. Homodimer. The cofactor is pyridoxal 5'-phosphate.

Its subcellular location is the cytoplasm. It carries out the reaction (6R)-5,10-methylene-5,6,7,8-tetrahydrofolate + glycine + H2O = (6S)-5,6,7,8-tetrahydrofolate + L-serine. Its pathway is one-carbon metabolism; tetrahydrofolate interconversion. It functions in the pathway amino-acid biosynthesis; glycine biosynthesis; glycine from L-serine: step 1/1. Functionally, catalyzes the reversible interconversion of serine and glycine with tetrahydrofolate (THF) serving as the one-carbon carrier. This reaction serves as the major source of one-carbon groups required for the biosynthesis of purines, thymidylate, methionine, and other important biomolecules. Also exhibits THF-independent aldolase activity toward beta-hydroxyamino acids, producing glycine and aldehydes, via a retro-aldol mechanism. The sequence is that of Serine hydroxymethyltransferase from Klebsiella pneumoniae (strain 342).